The primary structure comprises 77 residues: Translation initiation factor IF-1, chloroplastic (77 aa).

An S1-like domain is found at 1 to 71 (MKEQKWIHEG…TRGRIIYRLR (71 aa)).

Belongs to the IF-1 family. Component of the 30S ribosomal translation pre-initiation complex which assembles on the 30S ribosome in the order IF-2 and IF-3, IF-1 and N-formylmethionyl-tRNA(fMet); mRNA recruitment can occur at any time during PIC assembly.

The protein localises to the plastid. It localises to the chloroplast. Its function is as follows. One of the essential components for the initiation of protein synthesis. Stabilizes the binding of IF-2 and IF-3 on the 30S subunit to which N-formylmethionyl-tRNA(fMet) subsequently binds. Helps modulate mRNA selection, yielding the 30S pre-initiation complex (PIC). Upon addition of the 50S ribosomal subunit IF-1, IF-2 and IF-3 are released leaving the mature 70S translation initiation complex. This Hedera helix (English ivy) protein is Translation initiation factor IF-1, chloroplastic.